The sequence spans 330 residues: Methylthioribose-1-phosphate isomerase (330 aa).

Substrate-binding positions include 49–51 (RGA), R83, and Q179. The active-site Proton donor is D220. 230-231 (NK) is a binding site for substrate.

The protein belongs to the eIF-2B alpha/beta/delta subunits family. MtnA subfamily.

The catalysed reaction is 5-(methylsulfanyl)-alpha-D-ribose 1-phosphate = 5-(methylsulfanyl)-D-ribulose 1-phosphate. Its pathway is amino-acid biosynthesis; L-methionine biosynthesis via salvage pathway; L-methionine from S-methyl-5-thio-alpha-D-ribose 1-phosphate: step 1/6. Catalyzes the interconversion of methylthioribose-1-phosphate (MTR-1-P) into methylthioribulose-1-phosphate (MTRu-1-P). The chain is Methylthioribose-1-phosphate isomerase from Thermus thermophilus (strain ATCC BAA-163 / DSM 7039 / HB27).